The chain runs to 291 residues: 4-hydroxy-tetrahydrodipicolinate synthase (291 aa).

Position 44 (Thr44) interacts with pyruvate. Tyr132 acts as the Proton donor/acceptor in catalysis. The active-site Schiff-base intermediate with substrate is the Lys160. Ile202 contacts pyruvate.

It belongs to the DapA family. In terms of assembly, homotetramer; dimer of dimers.

It localises to the cytoplasm. The catalysed reaction is L-aspartate 4-semialdehyde + pyruvate = (2S,4S)-4-hydroxy-2,3,4,5-tetrahydrodipicolinate + H2O + H(+). The protein operates within amino-acid biosynthesis; L-lysine biosynthesis via DAP pathway; (S)-tetrahydrodipicolinate from L-aspartate: step 3/4. Functionally, catalyzes the condensation of (S)-aspartate-beta-semialdehyde [(S)-ASA] and pyruvate to 4-hydroxy-tetrahydrodipicolinate (HTPA). The sequence is that of 4-hydroxy-tetrahydrodipicolinate synthase from Zymomonas mobilis subsp. mobilis (strain ATCC 31821 / ZM4 / CP4).